The following is a 336-amino-acid chain: Potassium channel subfamily K member 1 (336 aa).

Over 1–20 (MLQSLAGSSCVRLVERHRSA) the chain is Cytoplasmic. Residues 21-41 (RCFGFLVLGYLLYLVFGAVVF) traverse the membrane as a helical segment. The Extracellular portion of the chain corresponds to 42 to 103 (SSVELPYEDL…SNASGNWNWD (62 aa)). The N-linked (GlcNAc...) asparagine glycan is linked to asparagine 95. The helical intramembrane region spans 104 to 116 (FTSALFFASTVLS). The stretch at 117–122 (TTGYGH) is an intramembrane region. The segment at 117–122 (TTGYGH) is selectivity filter 1. The Extracellular segment spans residues 123–132 (TVPLSDGGKA). Residues 133 to 156 (FCIIYSVIGIPFTLLFLTAVVQRI) form a helical membrane-spanning segment. Over 157–181 (TVHVTRRPVLYFHIRWGFSKQVVAI) the chain is Cytoplasmic. A helical transmembrane segment spans residues 182–202 (VHAVLLGFVTVSCFFFIPAAV). At 203 to 211 (FSVLEDDWN) the chain is on the extracellular side. An intramembrane region (helical) is located at residues 212–224 (FLESFYFCFISLS). Positions 225–230 (TIGLGD) are selectivity filter 2. An intramembrane segment occupies 225-231 (TIGLGDY). Topologically, residues 232 to 243 (VPGEGYNQKFRE) are extracellular. A helical membrane pass occupies residues 244–267 (LYKIGITCYLLLGLIAMLVVLETF). Residues 268 to 336 (CELHELKKFR…SACMDGPANH (69 aa)) are Cytoplasmic-facing. Lysine 274 participates in a covalent cross-link: Glycyl lysine isopeptide (Lys-Gly) (interchain with G-Cter in SUMO). The tract at residues 293-299 (IIEHDQL) is important for intracellular retention in recycling endosomes. Residues 315-336 (QKQNEPFVATQSSACMDGPANH) form a disordered region. Serine 326 carries the post-translational modification Phosphoserine.

This sequence belongs to the two pore domain potassium channel (TC 1.A.1.8) family. As to quaternary structure, homodimer; disulfide-linked. Heterodimer with KCNK2; disulfide-linked. In astrocytes, forms mostly heterodimeric potassium channels with KCNK2, with only a minor proportion of functional channels containing homodimeric KCNK1. Interacts with KCNK3 and KCNK9, forming functional heterodimeric channels. Interacts with GNG4. Identified in a complex with PSD and ARF6; interacts only with PSD that is bound to ARF6. Interacts with UBE2I. In terms of processing, sumoylation is controversial. Sumoylated by UBE2I. Not sumoylated when expressed in xenopus oocytes or mammalian cells. Sumoylation inactivates the channel, but does not interfere with expression at the cell membrane. Sumoylation of a single subunit is sufficient to silence the dimeric channel. Sumoylation of KCNK1 is sufficient to silence heterodimeric channels formed by KCNK1 and KCNK3 or KCNK9. Desumoylated by SENP1; this activates the channel. Desumoylated by SENP1; this strongly increases halothane-mediated activation of heterodimeric channels formed with KCNK9. SENP1 treatment has no effect.

It is found in the cell membrane. The protein localises to the recycling endosome. Its subcellular location is the synaptic cell membrane. The protein resides in the cytoplasmic vesicle. It localises to the perikaryon. It is found in the cell projection. The protein localises to the dendrite. Its subcellular location is the apical cell membrane. The catalysed reaction is K(+)(in) = K(+)(out). The enzyme catalyses NH4(+)(in) = NH4(+)(out). It catalyses the reaction Na(+)(in) = Na(+)(out). It carries out the reaction Rb(+)(in) = Rb(+)(out). The catalysed reaction is Cs(+)(in) = Cs(+)(out). The enzyme catalyses Li(+)(in) = Li(+)(out). It catalyses the reaction L-glutamate(out) = L-glutamate(in). It carries out the reaction chloride(in) = chloride(out). Its function is as follows. Ion channel that contributes to passive transmembrane potassium transport and to the regulation of the resting membrane potential in brain astrocytes, but also in kidney and in other tissues. Forms dimeric channels through which potassium ions pass in accordance with their electrochemical gradient. The channel is selective for K(+) ions at physiological potassium concentrations and at neutral pH, but becomes permeable to Na(+) at subphysiological K(+) levels, and upon acidification of the extracellular medium. The homodimer has very low potassium channel activity, when expressed in heterologous systems, and can function as weakly inward rectifying potassium channel. Channel activity is modulated by activation of serotonin receptors. Heterodimeric channels containing KCNK1 and KCNK2 have much higher activity, and may represent the predominant form in astrocytes. Heterodimeric channels containing KCNK1 and KCNK3 or KCNK9 have much higher activity. Heterodimeric channels formed by KCNK1 and KCNK9 may contribute to halothane-sensitive currents. Mediates outward rectifying potassium currents in dentate gyrus granule cells and contributes to the regulation of their resting membrane potential. Contributes to the regulation of action potential firing in dentate gyrus granule cells and down-regulates their intrinsic excitability. In astrocytes, the heterodimer formed by KCNK1 and KCNK2 is required for rapid glutamate release in response to activation of G-protein coupled receptors, such as F2R and CNR1. Required for normal ion and water transport in the kidney. Contributes to the regulation of the resting membrane potential of pancreatic beta cells. The low channel activity of homodimeric KCNK1 may be due to sumoylation. The low channel activity may be due to rapid internalization from the cell membrane and retention in recycling endosomes. Permeable to monovalent cations with ion selectivity for K(+) &gt; Rb(+) &gt;&gt; NH4(+) &gt;&gt; Cs(+) = Na(+) = Li(+). This Pongo abelii (Sumatran orangutan) protein is Potassium channel subfamily K member 1.